The chain runs to 205 residues: UPF0637 protein OB1420 (205 aa).

It belongs to the UPF0637 family.

In Oceanobacillus iheyensis (strain DSM 14371 / CIP 107618 / JCM 11309 / KCTC 3954 / HTE831), this protein is UPF0637 protein OB1420.